Consider the following 263-residue polypeptide: Endonuclease 8 (263 aa).

Pro2 acts as the Schiff-base intermediate with DNA in catalysis. Glu3 acts as the Proton donor in catalysis. Residue Lys53 is the Proton donor; for beta-elimination activity of the active site. DNA is bound by residues Gln70, Arg125, and Asn169. The FPG-type zinc finger occupies 229 to 263 (KVFHRDGEACERCGGIIEKTTLSSRPFYWCAHCQK). The active-site Proton donor; for delta-elimination activity is Arg253.

It belongs to the FPG family. Requires Zn(2+) as cofactor.

The enzyme catalyses 2'-deoxyribonucleotide-(2'-deoxyribose 5'-phosphate)-2'-deoxyribonucleotide-DNA = a 3'-end 2'-deoxyribonucleotide-(2,3-dehydro-2,3-deoxyribose 5'-phosphate)-DNA + a 5'-end 5'-phospho-2'-deoxyribonucleoside-DNA + H(+). Functionally, involved in base excision repair of DNA damaged by oxidation or by mutagenic agents. Acts as a DNA glycosylase that recognizes and removes damaged bases. Has a preference for oxidized pyrimidines, such as thymine glycol, 5,6-dihydrouracil and 5,6-dihydrothymine. Has AP (apurinic/apyrimidinic) lyase activity and introduces nicks in the DNA strand. Cleaves the DNA backbone by beta-delta elimination to generate a single-strand break at the site of the removed base with both 3'- and 5'-phosphates. In Salmonella typhi, this protein is Endonuclease 8.